The sequence spans 373 residues: RNA cytidine acetyltransferase (373 aa).

Arginine 53 serves as a coordination point for ATP. Residues 216–218 (IAT) and 223–229 (TGMGYGS) contribute to the acetyl-CoA site. Residues 246-271 (GEFEEENEAAKPADEESDDESNLLKE) are disordered. Arginine 313 serves as a coordination point for acetyl-CoA.

Belongs to the RNA cytidine acetyltransferase family. NAT10 subfamily.

It localises to the nucleus. It is found in the nucleolus. The catalysed reaction is a cytidine in 18S rRNA + acetyl-CoA + ATP + H2O = an N(4)-acetylcytidine in 18S rRNA + ADP + phosphate + CoA + H(+). It carries out the reaction a cytidine in tRNA + acetyl-CoA + ATP + H2O = an N(4)-acetylcytidine in tRNA + ADP + phosphate + CoA + H(+). Functionally, RNA cytidine acetyltransferase with specificity toward both 18S rRNA and tRNAs. Catalyzes the formation of N(4)-acetylcytidine (ac4C) in 18S rRNA. Required for early nucleolar cleavages of precursor rRNA at sites A0, A1 and A2 during 18S rRNA synthesis. Catalyzes the formation of ac4C in serine and leucine tRNAs. Requires a tRNA-binding adapter protein for full tRNA acetyltransferase activity but not for 18S rRNA acetylation. The sequence is that of RNA cytidine acetyltransferase from Achlya ambisexualis (Water mold).